The primary structure comprises 557 residues: Prosaposin (557 aa).

An N-terminal signal peptide occupies residues 1–16 (MYALALFASLLATALT). The propeptide occupies 17-59 (SPVQDPKTCSGGSAVLCRDVKTAVDCGAVKHCQQMVWSKPTAK). Residues 18-58 (PVQDPKTCSGGSAVLCRDVKTAVDCGAVKHCQQMVWSKPTA) enclose the Saposin A-type 1 domain. Saposin B-type domains follow at residues 59-142 (KSLP…QSLQ), 193-277 (NEDV…NEVK), 313-394 (NVIL…AARP), and 438-519 (NGGF…PSAY). 3 cysteine pairs are disulfide-bonded: Cys63-Cys138, Cys66-Cys132, and Cys94-Cys106. The N-linked (GlcNAc...) asparagine glycan is linked to Asn80. The propeptide occupies 143–193 (EYLAEQNQKQLESNKIPEVDMARVVAPFMSNIPLLLYPQDHPRSQPQPKAN). 3 cysteine pairs are disulfide-bonded: Cys197–Cys273, Cys200–Cys267, and Cys229–Cys240. Asn214 carries an N-linked (GlcNAc...) asparagine glycan. Positions 277 to 312 (KRVPMKTLVPATETIKNILPALEMMDPYEQNLVQAH) are excised as a propeptide. 3 cysteine pairs are disulfide-bonded: Cys317–Cys390, Cys320–Cys384, and Cys348–Cys359. N-linked (GlcNAc...) asparagine glycosylation occurs at Asn334. Residues 393–437 (RPELVEALEQPAPAIVSALLKEPTPPKQPAQPKQSALPAHVPPQK) constitute a propeptide that is removed on maturation. 3 cysteine pairs are disulfide-bonded: Cys442-Cys515, Cys445-Cys509, and Cys473-Cys484. A glycan (N-linked (GlcNAc...) asparagine) is linked at Asn459. The propeptide occupies 520–557 (KLLLGTEKCVWGPSYWCQNMETAARCNAVDHCKRHVWN). Residues 521–557 (LLLGTEKCVWGPSYWCQNMETAARCNAVDHCKRHVWN) form the Saposin A-type 2 domain.

In terms of assembly, saposin-B is a homodimer. Prosaposin exists as a roughly half-half mixture of monomers and disulfide-linked dimers. Monomeric prosaposin interacts (via C-terminus) with sortilin/SORT1, the interaction is required for targeting to lysosomes. Interacts with GRN; facilitates lysosomal delivery of progranulin from the extracellular space and the biosynthetic pathway.

The protein resides in the secreted. It localises to the lysosome. Behaves as a myelinotrophic and neurotrophic factor, these effects are mediated by its G-protein-coupled receptors, GPR37 and GPR37L1, undergoing ligand-mediated internalization followed by ERK phosphorylation signaling. Functionally, saposin-A and saposin-C stimulate the hydrolysis of glucosylceramide by beta-glucosylceramidase (EC 3.2.1.45) and galactosylceramide by beta-galactosylceramidase (EC 3.2.1.46). Saposin-C apparently acts by combining with the enzyme and acidic lipid to form an activated complex, rather than by solubilizing the substrate. In terms of biological role, saposin-B stimulates the hydrolysis of galacto-cerebroside sulfate by arylsulfatase A (EC 3.1.6.8), GM1 gangliosides by beta-galactosidase (EC 3.2.1.23) and globotriaosylceramide by alpha-galactosidase A (EC 3.2.1.22). Saposin-B forms a solubilizing complex with the substrates of the sphingolipid hydrolases. Its function is as follows. Saposin-D is a specific sphingomyelin phosphodiesterase activator (EC 3.1.4.12). Saposins are specific low-molecular mass non-enzymatic proteins, they participate in the lysosomal degradation of sphingolipids, which takes place by the sequential action of specific hydrolases. The polypeptide is Prosaposin (Psap) (Mus musculus (Mouse)).